Reading from the N-terminus, the 188-residue chain is Acireductone dioxygenase (188 aa).

Residues 1–20 (MSRLRIFADSNPTTPHFDSR) are disordered. Fe(2+) is bound by residues histidine 97, histidine 99, glutamate 103, and histidine 141. Histidine 97, histidine 99, glutamate 103, and histidine 141 together coordinate Ni(2+).

The protein belongs to the acireductone dioxygenase (ARD) family. Monomer. It depends on Fe(2+) as a cofactor. Ni(2+) is required as a cofactor.

It catalyses the reaction 1,2-dihydroxy-5-(methylsulfanyl)pent-1-en-3-one + O2 = 3-(methylsulfanyl)propanoate + CO + formate + 2 H(+). It carries out the reaction 1,2-dihydroxy-5-(methylsulfanyl)pent-1-en-3-one + O2 = 4-methylsulfanyl-2-oxobutanoate + formate + 2 H(+). The protein operates within amino-acid biosynthesis; L-methionine biosynthesis via salvage pathway; L-methionine from S-methyl-5-thio-alpha-D-ribose 1-phosphate: step 5/6. Functionally, catalyzes 2 different reactions between oxygen and the acireductone 1,2-dihydroxy-3-keto-5-methylthiopentene (DHK-MTPene) depending upon the metal bound in the active site. Fe-containing acireductone dioxygenase (Fe-ARD) produces formate and 2-keto-4-methylthiobutyrate (KMTB), the alpha-ketoacid precursor of methionine in the methionine recycle pathway. Ni-containing acireductone dioxygenase (Ni-ARD) produces methylthiopropionate, carbon monoxide and formate, and does not lie on the methionine recycle pathway. The chain is Acireductone dioxygenase from Xanthomonas campestris pv. campestris (strain 8004).